Consider the following 150-residue polypeptide: 3-hydroxyacyl-[acyl-carrier-protein] dehydratase FabZ (150 aa).

Residue H54 is part of the active site.

This sequence belongs to the thioester dehydratase family. FabZ subfamily.

It is found in the cytoplasm. The catalysed reaction is a (3R)-hydroxyacyl-[ACP] = a (2E)-enoyl-[ACP] + H2O. In terms of biological role, involved in unsaturated fatty acids biosynthesis. Catalyzes the dehydration of short chain beta-hydroxyacyl-ACPs and long chain saturated and unsaturated beta-hydroxyacyl-ACPs. This Chromobacterium violaceum (strain ATCC 12472 / DSM 30191 / JCM 1249 / CCUG 213 / NBRC 12614 / NCIMB 9131 / NCTC 9757 / MK) protein is 3-hydroxyacyl-[acyl-carrier-protein] dehydratase FabZ.